The chain runs to 653 residues: Endoglin (653 aa).

An N-terminal signal peptide occupies residues 1–26 (MDRGVLPLPITLLFVIYSFVPTTGLA). An OR1, N-terminal part region spans residues 27–47 (ERVGCDLQPVDPTRGEVTFTT). Residues 27–337 (ERVGCDLQPV…SSCGGVFQTT (311 aa)) are required for interaction with GDF2. Topologically, residues 27-581 (ERVGCDLQPV…IVSPDLSGKG (555 aa)) are extracellular. Intrachain disulfides connect cysteine 31–cysteine 209, cysteine 54–cysteine 184, cysteine 244–cysteine 330, cysteine 350–cysteine 382, cysteine 363–cysteine 442, cysteine 394–cysteine 412, and cysteine 493–cysteine 549. Positions 48–201 (SQVSEGCVAQ…MGATLEWQPR (154 aa)) are OR2. Asparagine 89, asparagine 135, and asparagine 266 each carry an N-linked (GlcNAc...) asparagine glycan. The tract at residues 202 to 330 (AQTPVQSCRL…SNVSLRASSC (129 aa)) is OR1, C-terminal part. Residues 270-282 (QILTTGEYSVKIF) form an essential for interaction with GDF2 region. Residues asparagine 307 and asparagine 322 are each glycosylated (N-linked (GlcNAc...) asparagine). The region spanning 363–510 (CGNQVMTLAL…GDMVELIQSR (148 aa)) is the ZP domain. Residues 582–606 (LVLPSVLGITFGAFLIGALLTAALW) form a helical membrane-spanning segment. The Cytoplasmic portion of the chain corresponds to 607–653 (YIYSHTRGPSKREPVVAVAAPASSESSSTNHSIGSTQSTPCSTSSMA). A compositionally biased stretch (low complexity) spans 624 to 634 (VAAPASSESSS). The segment at 624-653 (VAAPASSESSSTNHSIGSTQSTPCSTSSMA) is disordered. A compositionally biased stretch (polar residues) spans 635–653 (TNHSIGSTQSTPCSTSSMA). Phosphoserine; by TGFBR1 is present on residues serine 641 and serine 644.

As to quaternary structure, homodimer; disulfide-linked. Forms a heteromeric complex with the signaling receptors for transforming growth factor-beta: TGFBR1 and/or TGFBR2. Interacts with TGFB1. It is able to bind TGFB1 and TGFB2 with high affinity, but not TGFB3. Interacts with GDF2, forming a heterotetramer with a 2:2 stoichiometry. Interacts with ACVRL1. Can form a heteromeric complex with GDF2 and ACVRL1. Interacts with BMP10. Interacts with DYNLT4. Interacts with ARRB2. As to expression, detected on blood vessels (at protein level). Detected on adult pulmonary artery, capillaries supporting the heart muscle and lung alveolar capillary endothelial cells. Endoglin is restricted to endothelial cells in all tissues except bone marrow and is also found in stromal cells within the connective tissue of intestine, stomach, heart, skeletal muscle, uterus, ovary, oviduct, testis and thymus.

The protein resides in the cell membrane. Its function is as follows. Vascular endothelium glycoprotein that plays an important role in the regulation of angiogenesis. Required for normal structure and integrity of adult vasculature. Regulates the migration of vascular endothelial cells. Required for normal extraembryonic angiogenesis and for embryonic heart development. May regulate endothelial cell shape changes in response to blood flow, which drive vascular remodeling and establishment of normal vascular morphology during angiogenesis. May play a role in the binding of endothelial cells to integrins. Acts as a TGF-beta coreceptor and is involved in the TGF-beta/BMP signaling cascade that ultimately leads to the activation of SMAD transcription factors. Required for GDF2/BMP9 signaling through SMAD1 in endothelial cells and modulates TGFB1 signaling through SMAD3. The chain is Endoglin (Eng) from Mus musculus (Mouse).